The following is a 555-amino-acid chain: GPI-anchor transamidase component PIGS (555 aa).

Topologically, residues 2–18 (AAAGAAATHLEVARGKR) are cytoplasmic. R15 and R18 together coordinate a cardiolipin. The helical transmembrane segment at 19–39 (AALFFAAVAIVLGLPLWWKTT) threads the bilayer. Residues 40–517 (ETYRASLPYS…LHLLYFPDDQ (478 aa)) lie on the Lumenal side of the membrane. N-linked (GlcNAc...) asparagine glycosylation is found at N267 and N370. The chain crosses the membrane as a helical span at residues 518 to 532 (KFAIYIPLFLPMAVP). At 533-555 (ILLSLVKIFLETRKSWRKPEKTD) the chain is on the cytoplasmic side.

It belongs to the PIGS family. Heteropentamer. Part of the GPI-anchor transamidase complex, consisting of PIGK, PIGT, PIGS, PIGU and GAA1.

It is found in the endoplasmic reticulum membrane. Its pathway is glycolipid biosynthesis; glycosylphosphatidylinositol-anchor biosynthesis. Functionally, component of the glycosylphosphatidylinositol-anchor (GPI-anchor) transamidase (GPI-T) complex that catalyzes the formation of the linkage between a proprotein and a GPI-anchor and participates in GPI anchored protein biosynthesis. The protein is GPI-anchor transamidase component PIGS of Homo sapiens (Human).